A 118-amino-acid polypeptide reads, in one-letter code: Large ribosomal subunit protein bL20 (118 aa).

Belongs to the bacterial ribosomal protein bL20 family.

In terms of biological role, binds directly to 23S ribosomal RNA and is necessary for the in vitro assembly process of the 50S ribosomal subunit. It is not involved in the protein synthesizing functions of that subunit. The chain is Large ribosomal subunit protein bL20 from Cupriavidus metallidurans (strain ATCC 43123 / DSM 2839 / NBRC 102507 / CH34) (Ralstonia metallidurans).